A 356-amino-acid polypeptide reads, in one-letter code: NADH-quinone oxidoreductase subunit H (356 aa).

A run of 8 helical transmembrane segments spans residues 18–38 (IVMIAQSVLLLVVLLVAIAYI), 87–107 (GVFLLAPLVSCVLALAAWAVI), 120–140 (VGILFIFAISSLSIYGIIMAG), 166–186 (IGFVIITVLLCAGTLNLSAVV), 205–225 (ILNWYVWPLFPMFVVFYVSAL), 265–285 (AITTMCALATILFLGGWLPPI), 292–312 (WVPGVIWFALKLFFMFFLIAM), and 333–353 (FLPLSLVMVVIVAGVLHFAGI).

Belongs to the complex I subunit 1 family. NDH-1 is composed of 14 different subunits. Subunits NuoA, H, J, K, L, M, N constitute the membrane sector of the complex.

It is found in the cell inner membrane. It catalyses the reaction a quinone + NADH + 5 H(+)(in) = a quinol + NAD(+) + 4 H(+)(out). NDH-1 shuttles electrons from NADH, via FMN and iron-sulfur (Fe-S) centers, to quinones in the respiratory chain. The immediate electron acceptor for the enzyme in this species is believed to be ubiquinone. Couples the redox reaction to proton translocation (for every two electrons transferred, four hydrogen ions are translocated across the cytoplasmic membrane), and thus conserves the redox energy in a proton gradient. This subunit may bind ubiquinone. In Bradyrhizobium sp. (strain BTAi1 / ATCC BAA-1182), this protein is NADH-quinone oxidoreductase subunit H.